The primary structure comprises 508 residues: Tryptamine 4-monooxygenase (508 aa).

The N-terminal stretch at 1–19 is a signal peptide; it reads MIAVLFSFVIAGCIYYIVS. Cysteine 439 serves as a coordination point for heme.

This sequence belongs to the cytochrome P450 family. Requires heme as cofactor.

It carries out the reaction tryptamine + AH2 + O2 = 4-hydroxytryptamine + A + H2O. It functions in the pathway secondary metabolite biosynthesis. Cytochrome P450 monooxygenase; part of the gene cluster that mediates the biosynthesis of psilocybin, a psychotropic tryptamine-derived natural product. The first step in the pathway is the decarboxylation of L-tryptophan to tryptamine by the decarboxylase psiD. 4-hydroxy-L-tryptophan is accepted as substrate by psiD as well. The cytochrome P450 monooxygenase psiH then converts tryptamine to 4-hydroxytryptamine. The kinase psiK catalyzes the 4-O-phosphorylation step by converting 4-hydroxytryptamine into norbaeocystin. The methyltransferase psiM then catalyzes iterative methyl transfer to the amino group of norbaeocystin to yield psilocybin via a monomethylated intermediate, baeocystin. The polypeptide is Tryptamine 4-monooxygenase (Psilocybe cubensis (Psychedelic mushroom)).